A 364-amino-acid chain; its full sequence is Probable dual-specificity RNA methyltransferase RlmN (364 aa).

Catalysis depends on glutamate 107, which acts as the Proton acceptor. Positions 113–346 constitute a Radical SAM core domain; that stretch reads HDYGNSVCVT…ATIRREQGSD (234 aa). The cysteines at positions 120 and 351 are disulfide-linked. Positions 127, 131, and 134 each coordinate [4Fe-4S] cluster. Residues 177 to 178, serine 209, 232 to 234, and asparagine 308 each bind S-adenosyl-L-methionine; these read GE and SLH. The active-site S-methylcysteine intermediate is cysteine 351.

It belongs to the radical SAM superfamily. RlmN family. The cofactor is [4Fe-4S] cluster.

The protein resides in the cytoplasm. It catalyses the reaction adenosine(2503) in 23S rRNA + 2 reduced [2Fe-2S]-[ferredoxin] + 2 S-adenosyl-L-methionine = 2-methyladenosine(2503) in 23S rRNA + 5'-deoxyadenosine + L-methionine + 2 oxidized [2Fe-2S]-[ferredoxin] + S-adenosyl-L-homocysteine. It carries out the reaction adenosine(37) in tRNA + 2 reduced [2Fe-2S]-[ferredoxin] + 2 S-adenosyl-L-methionine = 2-methyladenosine(37) in tRNA + 5'-deoxyadenosine + L-methionine + 2 oxidized [2Fe-2S]-[ferredoxin] + S-adenosyl-L-homocysteine. Functionally, specifically methylates position 2 of adenine 2503 in 23S rRNA and position 2 of adenine 37 in tRNAs. Confers resistance to some classes of antibiotics. This is Probable dual-specificity RNA methyltransferase RlmN from Staphylococcus aureus (strain bovine RF122 / ET3-1).